The primary structure comprises 420 residues: Structure-specific endonuclease subunit SLX1 homolog (420 aa).

Residues 19 to 106 (SSDNTYPWQN…QHPLKSRRLR (88 aa)) enclose the GIY-YIG domain. Disordered regions lie at residues 237–306 (SVEE…AAVN) and 311–330 (DDSA…DDVA). Residues 247-266 (PSSCSVPPSTGSSAAPTPGA) show a composition bias toward low complexity. Residues 279-301 (VDPRLDSDDRDDNHQFESPDNHE) show a composition bias toward basic and acidic residues. The span at 311 to 327 (DDSADDGTTDGNEDGPD) shows a compositional bias: acidic residues. Residues 348 to 405 (CGHCHQSVYQELCIVCLNATCTYRAHLLCAAQAAVHPLGQSSPSETRLVPLRHSCPRC) form an SLX1-type zinc finger.

It belongs to the SLX1 family. In terms of assembly, forms a heterodimer with a member of the SLX4 family. It depends on a divalent metal cation as a cofactor.

Its subcellular location is the nucleus. In terms of biological role, catalytic subunit of a heterodimeric structure-specific endonuclease that resolves DNA secondary structures generated during DNA repair and recombination. Has endonuclease activity towards branched DNA substrates, introducing single-strand cuts in duplex DNA close to junctions with ss-DNA. In Monosiga brevicollis (Choanoflagellate), this protein is Structure-specific endonuclease subunit SLX1 homolog.